Consider the following 378-residue polypeptide: Manganese peroxidase 1 (378 aa).

The N-terminal stretch at 1–21 (MAFKSLIAFVALAAAVRAAPT) is a signal peptide. 5 disulfides stabilise this stretch: cysteine 24–cysteine 36, cysteine 35–cysteine 310, cysteine 54–cysteine 138, cysteine 274–cysteine 340, and cysteine 362–cysteine 369. Residues glutamate 56 and glutamate 60 each coordinate Mn(2+). Residue histidine 67 is the Proton acceptor of the active site. Ca(2+)-binding residues include aspartate 68, glycine 83, aspartate 85, and serine 87. N-linked (GlcNAc...) asparagine glycosylation is found at asparagine 97 and asparagine 152. Heme b is bound at residue histidine 194. Serine 195 contributes to the Ca(2+) binding site. Aspartate 200 contributes to the Mn(2+) binding site. Ca(2+) is bound by residues aspartate 212, threonine 214, threonine 217, and aspartate 219. N-linked (GlcNAc...) asparagine glycosylation is present at asparagine 238.

Belongs to the peroxidase family. Ligninase subfamily. The cofactor is Ca(2+). It depends on heme b as a cofactor.

It localises to the secreted. The enzyme catalyses 2 Mn(2+) + H2O2 + 2 H(+) = 2 Mn(3+) + 2 H2O. Functionally, catalyzes the oxidation of Mn(2+) to Mn(3+). The latter, acting as a diffusible redox mediator, is capable of oxidizing a variety of lignin compounds. The chain is Manganese peroxidase 1 (MNP1) from Phanerodontia chrysosporium (White-rot fungus).